An 827-amino-acid chain; its full sequence is 4-hydroxy-3-methylbut-2-enyl diphosphate reductase (827 aa).

A 4-hydroxy-3-methylbut-2-enyl diphosphate reductase region spans residues 1–284 (MEIIRAKHMG…MNIEKKVRGI (284 aa)). Cysteine 12 serves as a coordination point for [4Fe-4S] cluster. (2E)-4-hydroxy-3-methylbut-2-enyl diphosphate contacts are provided by histidine 40 and histidine 79. The dimethylallyl diphosphate site is built by histidine 40 and histidine 79. 2 residues coordinate isopentenyl diphosphate: histidine 40 and histidine 79. Position 101 (cysteine 101) interacts with [4Fe-4S] cluster. Histidine 129 contributes to the (2E)-4-hydroxy-3-methylbut-2-enyl diphosphate binding site. Histidine 129 contacts dimethylallyl diphosphate. Histidine 129 contacts isopentenyl diphosphate. The Proton donor role is filled by glutamate 131. Threonine 168 is a (2E)-4-hydroxy-3-methylbut-2-enyl diphosphate binding site. Cysteine 196 contacts [4Fe-4S] cluster. Serine 224, serine 225, asparagine 226, and serine 268 together coordinate (2E)-4-hydroxy-3-methylbut-2-enyl diphosphate. The dimethylallyl diphosphate site is built by serine 224, serine 225, asparagine 226, and serine 268. Serine 224, serine 225, asparagine 226, and serine 268 together coordinate isopentenyl diphosphate. 4 consecutive S1 motif domains span residues 477–545 (GQIV…LSIK), 562–632 (DDEI…LGIK), 649–716 (DTVI…GSLK), and 733–802 (GTTV…LSIK).

It in the N-terminal section; belongs to the IspH family. Requires [4Fe-4S] cluster as cofactor.

It catalyses the reaction isopentenyl diphosphate + 2 oxidized [2Fe-2S]-[ferredoxin] + H2O = (2E)-4-hydroxy-3-methylbut-2-enyl diphosphate + 2 reduced [2Fe-2S]-[ferredoxin] + 2 H(+). The catalysed reaction is dimethylallyl diphosphate + 2 oxidized [2Fe-2S]-[ferredoxin] + H2O = (2E)-4-hydroxy-3-methylbut-2-enyl diphosphate + 2 reduced [2Fe-2S]-[ferredoxin] + 2 H(+). It functions in the pathway isoprenoid biosynthesis; dimethylallyl diphosphate biosynthesis; dimethylallyl diphosphate from (2E)-4-hydroxy-3-methylbutenyl diphosphate: step 1/1. It participates in isoprenoid biosynthesis; isopentenyl diphosphate biosynthesis via DXP pathway; isopentenyl diphosphate from 1-deoxy-D-xylulose 5-phosphate: step 6/6. Functionally, catalyzes the conversion of 1-hydroxy-2-methyl-2-(E)-butenyl 4-diphosphate (HMBPP) into a mixture of isopentenyl diphosphate (IPP) and dimethylallyl diphosphate (DMAPP). Acts in the terminal step of the DOXP/MEP pathway for isoprenoid precursor biosynthesis. This chain is 4-hydroxy-3-methylbut-2-enyl diphosphate reductase, found in Fusobacterium nucleatum subsp. nucleatum (strain ATCC 25586 / DSM 15643 / BCRC 10681 / CIP 101130 / JCM 8532 / KCTC 2640 / LMG 13131 / VPI 4355).